We begin with the raw amino-acid sequence, 567 residues long: Zinc finger protein 512 (567 aa).

The disordered stretch occupies residues 1–32 (MSSRLGAVPATSGPTTFKQQRSTRIVGAKNSR). Positions 12–23 (SGPTTFKQQRST) are enriched in polar residues. Glycyl lysine isopeptide (Lys-Gly) (interchain with G-Cter in SUMO2) cross-links involve residues K18 and K84. The tract at residues 86 to 148 (AATSHVEGSG…QARRIRKEPP (63 aa)) is disordered. The span at 119-130 (KKHKLYGRKQRP) shows a compositional bias: basic residues. A C2H2-type 1 zinc finger spans residues 197-220 (FTCHHCGKQLRSLAGMKYHVMANH). K227 participates in a covalent cross-link: Glycyl lysine isopeptide (Lys-Gly) (interchain with G-Cter in SUMO2). The segment at 287 to 310 (LKCHHCGKPYRSKAGLAYHLRSEH) adopts a C2H2-type 2 zinc-finger fold. K333 is covalently cross-linked (Glycyl lysine isopeptide (Lys-Gly) (interchain with G-Cter in SUMO2)). A C2H2-type 3; atypical zinc finger spans residues 406 to 430 (IQCPNQGCEAVYSSVSGLKAHLGSC). Residues 440 to 463 (YKCLLCQKEFVSESGVKYHINSVH) form a C2H2-type 4 zinc finger. The disordered stretch occupies residues 486 to 567 (QRQQEEEKRR…PKTNHKRGRK (82 aa)). Positions 495 to 508 (RQQHRSRRSLRRRQ) are enriched in basic residues. Residues 523–532 (VGKDQRRNNE) show a composition bias toward basic and acidic residues. Residues 556–567 (KPPKTNHKRGRK) show a composition bias toward basic residues.

Belongs to the krueppel C2H2-type zinc-finger protein family.

It is found in the nucleus. In terms of biological role, may be involved in transcriptional regulation. The polypeptide is Zinc finger protein 512 (ZNF512) (Pongo abelii (Sumatran orangutan)).